We begin with the raw amino-acid sequence, 246 residues long: UDP-2,3-diacylglucosamine hydrolase (246 aa).

Residues Asp-8, His-10, Asp-41, Asn-79, and His-114 each coordinate Mn(2+). A substrate-binding site is contributed by 79–80; sequence NR. Substrate-binding residues include Asp-122, Ser-160, Asn-164, Lys-167, and His-195. Residues His-195 and His-197 each contribute to the Mn(2+) site.

This sequence belongs to the LpxH family. Mn(2+) is required as a cofactor.

It localises to the cell inner membrane. The enzyme catalyses UDP-2-N,3-O-bis[(3R)-3-hydroxytetradecanoyl]-alpha-D-glucosamine + H2O = 2-N,3-O-bis[(3R)-3-hydroxytetradecanoyl]-alpha-D-glucosaminyl 1-phosphate + UMP + 2 H(+). Its pathway is glycolipid biosynthesis; lipid IV(A) biosynthesis; lipid IV(A) from (3R)-3-hydroxytetradecanoyl-[acyl-carrier-protein] and UDP-N-acetyl-alpha-D-glucosamine: step 4/6. In terms of biological role, hydrolyzes the pyrophosphate bond of UDP-2,3-diacylglucosamine to yield 2,3-diacylglucosamine 1-phosphate (lipid X) and UMP by catalyzing the attack of water at the alpha-P atom. Involved in the biosynthesis of lipid A, a phosphorylated glycolipid that anchors the lipopolysaccharide to the outer membrane of the cell. This chain is UDP-2,3-diacylglucosamine hydrolase, found in Chromohalobacter salexigens (strain ATCC BAA-138 / DSM 3043 / CIP 106854 / NCIMB 13768 / 1H11).